We begin with the raw amino-acid sequence, 347 residues long: Indole-3-glycerol phosphate lyase, chloroplastic (347 aa).

2 disordered regions span residues 1-38 and 64-89; these read MAFAPKTSSSSSLSSALQAAQSPPLLLRRMSSTATPRR and APPQAPAPAPVPPKQAAAPAERRSRP. The N-terminal 53 residues, 1 to 53, are a transit peptide targeting the chloroplast; it reads MAFAPKTSSSSSLSSALQAAQSPPLLLRRMSSTATPRRRYDAAVVVTTTTTAR. Residues 8-27 show a composition bias toward low complexity; it reads SSSSSLSSALQAAQSPPLLL. A compositionally biased stretch (pro residues) spans 64 to 76; the sequence is APPQAPAPAPVPP.

Belongs to the TrpA family. As to quaternary structure, tetramer of two alpha and two beta chains for the tryptophan synthase activity. Homodimer of alpha chains for the indole-3-glycerol phosphate lyase activity.

It localises to the plastid. The protein localises to the chloroplast. It carries out the reaction (1S,2R)-1-C-(indol-3-yl)glycerol 3-phosphate = indole + D-glyceraldehyde 3-phosphate. The catalysed reaction is (1S,2R)-1-C-(indol-3-yl)glycerol 3-phosphate + L-serine = D-glyceraldehyde 3-phosphate + L-tryptophan + H2O. It functions in the pathway secondary metabolite biosynthesis; 2,4-dihydroxy-1,4-benzoxazin-3-one biosynthesis; 2,4-dihydroxy-1,4-benzoxazin-3-one from indoleglycerol phosphate: step 1/5. The protein operates within amino-acid biosynthesis; L-tryptophan biosynthesis; L-tryptophan from chorismate: step 5/5. The alpha subunit is responsible for the aldol cleavage of indoleglycerol phosphate to indole and glyceraldehyde 3-phosphate. In bacteria, tryptophan synthase alpha (TSA) activity is almost completely dependent on formation of an active alpha2beta2 complex with tryptophan synthase beta (TSB), and indole is usually not released during tryptophan synthesis. In maize, the TSA homolog BX1 catalyzes the formation of free indole from indole-3-glycerol phosphate, independently of TSB. This chain is Indole-3-glycerol phosphate lyase, chloroplastic (BX1), found in Zea mays (Maize).